The chain runs to 644 residues: Core protein VP4 (644 aa).

It belongs to the orbivirus VP4 family.

It is found in the virion. The VP4 protein is one of the five proteins (with VP1, VP3, VP6 and VP7) which form the inner capsid of the virus. The chain is Core protein VP4 (Segment-4) from Antilocapra americana (Pronghorn).